A 145-amino-acid polypeptide reads, in one-letter code: Trafficking protein particle complex subunit 1 (145 aa).

It belongs to the TRAPP small subunits family. BET5 subfamily. As to quaternary structure, part of the multisubunit transport protein particle (TRAPP) complex. The heterodimer TRAPPC6B-TRAPPC3 interacts with TRAPPC1 likely providing a core for TRAPP complex formation.

The protein resides in the golgi apparatus. Its subcellular location is the cis-Golgi network. The protein localises to the endoplasmic reticulum. Its function is as follows. May play a role in vesicular transport from endoplasmic reticulum to Golgi. The chain is Trafficking protein particle complex subunit 1 from Mus musculus (Mouse).